A 61-amino-acid polypeptide reads, in one-letter code: Small ribosomal subunit protein uS14 (61 aa).

Zn(2+)-binding residues include Cys-24, Cys-27, Cys-40, and Cys-43.

The protein belongs to the universal ribosomal protein uS14 family. Zinc-binding uS14 subfamily. Part of the 30S ribosomal subunit. Contacts proteins S3 and S10. Zn(2+) is required as a cofactor.

Functionally, binds 16S rRNA, required for the assembly of 30S particles and may also be responsible for determining the conformation of the 16S rRNA at the A site. The chain is Small ribosomal subunit protein uS14 from Borrelia duttonii (strain Ly).